Consider the following 420-residue polypeptide: Acetylornithine aminotransferase (420 aa).

Pyridoxal 5'-phosphate contacts are provided by residues 118–119 (GA) and Phe-151. A N(2)-acetyl-L-ornithine-binding site is contributed by Arg-154. 242–245 (DEVQ) lines the pyridoxal 5'-phosphate pocket. Lys-271 is subject to N6-(pyridoxal phosphate)lysine. Residue Ser-298 participates in N(2)-acetyl-L-ornithine binding. Residue Thr-299 coordinates pyridoxal 5'-phosphate.

The protein belongs to the class-III pyridoxal-phosphate-dependent aminotransferase family. ArgD subfamily. As to quaternary structure, homodimer. Requires pyridoxal 5'-phosphate as cofactor.

It is found in the cytoplasm. It carries out the reaction N(2)-acetyl-L-ornithine + 2-oxoglutarate = N-acetyl-L-glutamate 5-semialdehyde + L-glutamate. Its pathway is amino-acid biosynthesis; L-arginine biosynthesis; N(2)-acetyl-L-ornithine from L-glutamate: step 4/4. The polypeptide is Acetylornithine aminotransferase (Parasynechococcus marenigrum (strain WH8102)).